The primary structure comprises 571 residues: Proline--tRNA ligase (571 aa).

This sequence belongs to the class-II aminoacyl-tRNA synthetase family. ProS type 1 subfamily. In terms of assembly, homodimer.

Its subcellular location is the cytoplasm. It carries out the reaction tRNA(Pro) + L-proline + ATP = L-prolyl-tRNA(Pro) + AMP + diphosphate. Catalyzes the attachment of proline to tRNA(Pro) in a two-step reaction: proline is first activated by ATP to form Pro-AMP and then transferred to the acceptor end of tRNA(Pro). As ProRS can inadvertently accommodate and process non-cognate amino acids such as alanine and cysteine, to avoid such errors it has two additional distinct editing activities against alanine. One activity is designated as 'pretransfer' editing and involves the tRNA(Pro)-independent hydrolysis of activated Ala-AMP. The other activity is designated 'posttransfer' editing and involves deacylation of mischarged Ala-tRNA(Pro). The misacylated Cys-tRNA(Pro) is not edited by ProRS. This Actinobacillus pleuropneumoniae serotype 5b (strain L20) protein is Proline--tRNA ligase.